A 528-amino-acid polypeptide reads, in one-letter code: Probable cyclic di-GMP phosphodiesterase PdeC (528 aa).

2 consecutive transmembrane segments (helical) span residues Gly-14–Ala-34 and His-242–Leu-262. The region spanning Tyr-268–Pro-520 is the EAL domain.

It is found in the cell inner membrane. It carries out the reaction 3',3'-c-di-GMP + H2O = 5'-phosphoguanylyl(3'-&gt;5')guanosine + H(+). Phosphodiesterase (PDE) that catalyzes the hydrolysis of cyclic-di-GMP (c-di-GMP) to 5'-pGpG. Cyclic-di-GMP is a second messenger which controls cell surface-associated traits in bacteria. Overexpression reduces biofilm formation. In Escherichia coli (strain K12), this protein is Probable cyclic di-GMP phosphodiesterase PdeC.